The sequence spans 107 residues: MEVTSFILNATFKEFACFGNNYLIILPGIMLERNVFRHLNYSTNSICSHYQFFGGHYESFELLVVIVYYFSHVGSFSLAEIYRITWDKRIVLYGTTTTLVYCSEGSD.

The helical transmembrane segment at 62–79 (LLVVIVYYFSHVGSFSLA) threads the bilayer.

The protein resides in the nucleus membrane. This is an uncharacterized protein from Schizosaccharomyces pombe (strain 972 / ATCC 24843) (Fission yeast).